Consider the following 247-residue polypeptide: ATP synthase subunit a, chloroplastic (247 aa).

A run of 5 helical transmembrane segments spans residues 38–58, 95–115, 134–154, 199–219, and 220–240; these read QVLITSWVVIAILLGSAAIAV, VPFIGTMFLFIFVSNWSGALL, INTTVALALLTSVAYFYAGLT, LVVVVLVSLVPLVVPIPVMFL, and GLFTSGIQALIFATLAAAYIG.

The protein belongs to the ATPase A chain family. F-type ATPases have 2 components, CF(1) - the catalytic core - and CF(0) - the membrane proton channel. CF(1) has five subunits: alpha(3), beta(3), gamma(1), delta(1), epsilon(1). CF(0) has four main subunits: a, b, b' and c.

It is found in the plastid. The protein localises to the chloroplast thylakoid membrane. Functionally, key component of the proton channel; it plays a direct role in the translocation of protons across the membrane. In Calycanthus floridus var. glaucus (Eastern sweetshrub), this protein is ATP synthase subunit a, chloroplastic.